Reading from the N-terminus, the 120-residue chain is Crustacean hyperglycemic hormones 2 (120 aa).

The signal sequence occupies residues 1-27; the sequence is MIAFHMVWSALLASLLLLLLAPSASPV. Cystine bridges form between Cys-53-Cys-89, Cys-69-Cys-85, and Cys-72-Cys-98. Val-118 carries the post-translational modification Valine amide.

This sequence belongs to the arthropod CHH/MIH/GIH/VIH hormone family.

It is found in the secreted. In terms of biological role, hormone found in the sinus gland of isopods and decapods which controls the blood sugar level. Has a secretagogue action over the amylase released from the midgut gland. May act as a stress hormone and may be involved in the control of molting and reproduction. The chain is Crustacean hyperglycemic hormones 2 from Penaeus japonicus (Kuruma prawn).